The chain runs to 38 residues: MLRTIVVFAPIIAALAWVVFNIQKPAREQFNRDFLGKD.

Residues 4–22 form a helical membrane-spanning segment; sequence TIVVFAPIIAALAWVVFNI.

It belongs to the PsbY family. In terms of assembly, PSII is composed of 1 copy each of membrane proteins PsbA, PsbB, PsbC, PsbD, PsbE, PsbF, PsbH, PsbI, PsbJ, PsbK, PsbL, PsbM, PsbT, PsbX, PsbY, Psb30/Ycf12, peripheral proteins PsbO, CyanoQ (PsbQ), PsbU, PsbV and a large number of cofactors. It forms dimeric complexes.

Its subcellular location is the cellular thylakoid membrane. In terms of biological role, loosely associated component of the core of photosystem II (PSII), it is not always seen in crystals. PSII is a light-driven water plastoquinone oxidoreductase, using light energy to abstract electrons from H(2)O, generating a proton gradient subsequently used for ATP formation. In Prochlorococcus marinus (strain MIT 9215), this protein is Photosystem II reaction center protein Y.